The chain runs to 149 residues: Large ribosomal subunit protein bL9 (149 aa).

It belongs to the bacterial ribosomal protein bL9 family.

In terms of biological role, binds to the 23S rRNA. This is Large ribosomal subunit protein bL9 from Cutibacterium acnes (strain DSM 16379 / KPA171202) (Propionibacterium acnes).